The primary structure comprises 357 residues: DNA integrity scanning protein DisA (357 aa).

The region spanning 8 to 148 (PQELIEKIKL…NYKYVVNQVD (141 aa)) is the DAC domain. 3',3'-c-di-AMP is bound by residues Gly76, Leu94, Thr107, Thr111, and Arg128.

This sequence belongs to the DisA family. In terms of assembly, homooctamer. The cofactor is Mg(2+).

The catalysed reaction is 2 ATP = 3',3'-c-di-AMP + 2 diphosphate. Inhibited by 3'-dATP. Functionally, participates in a DNA-damage check-point. DisA forms globular foci that rapidly scan along the chromosomes searching for lesions. Has diadenylate cyclase activity, catalyzing the condensation of 2 ATP molecules into cyclic di-AMP (c-di-AMP). c-di-AMP likely acts as a signaling molecule that may couple DNA integrity with a cellular process. This rate-limiting step is the accessibility of the active site; mutating the possible exit tunnel (residues 128-130) increases product 2-fold despite Arg-130 being important for ATP-binding. Does not convert GTP to c-di-GMP. The sequence is that of DNA integrity scanning protein DisA from Thermotoga maritima (strain ATCC 43589 / DSM 3109 / JCM 10099 / NBRC 100826 / MSB8).